A 692-amino-acid chain; its full sequence is Furin-like protease kpc-1 (692 aa).

Residues 1-33 form the signal peptide; that stretch reads MSNISWYRHCSVRLQLVTLALFLLLGSASLGSA. An N-linked (GlcNAc...) asparagine glycan is attached at Asn-3. A propeptide spanning residues 34–139 is cleaved from the precursor; the sequence is HIDEEFEDDV…QQVAKRRVKR (106 aa). At 140–670 the chain is on the lumenal side; sequence GYRRIRRHTD…RSVQMEATSS (531 aa). Residues 152–177 are disordered; that stretch reads DIFEEDDDGTQISKSRNRKHPDPNDP. Position 176 (Asp-176) interacts with Ca(2+). In terms of domain architecture, Peptidase S8 spans 182-503; the sequence is MWYLNRGEHH…YGLMDAGAMV (322 aa). Residue Asp-221 is the Charge relay system of the active site. Asp-222 serves as a coordination point for substrate. Positions 230, 242, 247, and 249 each coordinate Ca(2+). The segment at 230-249 is disordered; it reads DISPNYDERASYDVNDRDND. 259–260 contributes to the substrate binding site; that stretch reads EN. The active-site Charge relay system is the His-262. Ile-273 lines the Ca(2+) pocket. A glycan (N-linked (GlcNAc...) asparagine) is linked at Asn-275. Residues Asn-276, Leu-278, and Ile-280 each contribute to the Ca(2+) site. 2 cysteine pairs are disulfide-bonded: Cys-279-Cys-428 and Cys-371-Cys-401. Residues Glu-304, 321–326, Asp-332, and 360–363 contribute to the substrate site; these read SWGPDD and ASGN. Asp-326 provides a ligand contact to Ca(2+). Position 369 (Asp-369) interacts with Ca(2+). Positions 374 and 376 each coordinate substrate. Residue Glu-399 coordinates Ca(2+). Ser-436 (charge relay system) is an active-site residue. Residue Ser-436 participates in substrate binding. N-linked (GlcNAc...) asparagine glycosylation is found at Asn-455 and Asn-487. Residues 512–646 form the P/Homo B domain; the sequence is VDEQHRCRQF…ELVLYGTDRE (135 aa). Cys-518 and Cys-544 are disulfide-bonded. Residues 570-572 carry the Cell attachment site motif; that stretch reads RGD. The chain crosses the membrane as a helical span at residues 671-692; it reads GTQYSIFHVITLVILTFSQILY.

This sequence belongs to the peptidase S8 family. Furin subfamily. As to quaternary structure, interacts (via extracellular domain) with receptor dma-1 (via extracellular domain); the interaction promotes dma-1 internalization. Ca(2+) is required as a cofactor. In terms of tissue distribution, expressed in the nervous system including the ventral nerve cord, the nerve ring and the retrovesicular ganglion, and in epithelial cells. Expressed in IL2 neurons. Expressed in PVD mechanosensory neurons. Expressed in pharynx with strong expression in the g2 pharyngeal gland cells and vpi pharyngeal intestinal valve cells. Expressed in intestine.

It localises to the cell membrane. The protein resides in the perikaryon. It is found in the cell projection. Its subcellular location is the axon. Functionally, furin-like protease which cleaves proproteins at the RX(K/R)R consensus motif. During neuronal development, regulates the formation and extension of dendrite branches and cellular positioning of various type of neurons. Together with chin-1 and cdc-42, plays a role in the development of the neuropil and is required for the guidance of axons from neurons, including SubL pioneer neurons and AIY interneurons, into the nerve ring. Its role in axon guidance in glia and pioneer neurons may be through ensuring the fmi-1 protein is correctly localized to the nerve ring. Promotes the formation, extension and self-avoidance of dendritic branches of PVD and FLP mechanosensory neurons. In PVD neurons, regulates plasma membrane levels of branching receptor dma-1 by targeting it to late endosomes and thus promotes normal dendrite branching and dendrite self-avoidance. Also controls dendrite extension in AIY and D-type motoneurons, dendrite branching in AQR sensory neurons and VC4/5 motoneurons, the normal number of dendritic branches in AVL neurons and the positioning of HSN and ALM/PLM neurons. Dispensable for maintaining dendrite branching in adults. Also regulates dauer-specific dendritic branching of IL2 neurons and dauer-specific nictation behavior. Under adverse environmental conditions, may promote dauer formation by processing insulin-like proteins ins-1 and ins-18, two daf-2/InsR antagonists. This chain is Furin-like protease kpc-1, found in Caenorhabditis elegans.